The primary structure comprises 386 residues: S-(hydroxymethyl)glutathione dehydrogenase (386 aa).

At serine 2 the chain carries N-acetylserine. Cysteine 49 lines the Zn(2+) pocket. Histidine 50 serves as a coordination point for NAD(+). Zn(2+) contacts are provided by histidine 71, glutamate 72, cysteine 101, cysteine 104, cysteine 107, cysteine 115, and cysteine 179. Residues 204–209 (GCGTVG), aspartate 228, 300–302 (IGV), and 325–327 (SAF) each bind NAD(+).

It belongs to the zinc-containing alcohol dehydrogenase family. Class-III subfamily. Requires Zn(2+) as cofactor.

Its subcellular location is the cytoplasm. It localises to the mitochondrion. The catalysed reaction is a primary alcohol + NAD(+) = an aldehyde + NADH + H(+). It catalyses the reaction a secondary alcohol + NAD(+) = a ketone + NADH + H(+). The enzyme catalyses S-(hydroxymethyl)glutathione + NADP(+) = S-formylglutathione + NADPH + H(+). It carries out the reaction S-(hydroxymethyl)glutathione + NAD(+) = S-formylglutathione + NADH + H(+). The catalysed reaction is S-nitrosoglutathione + NADH + H(+) = S-(hydroxysulfenamide)glutathione + NAD(+). Its function is as follows. Oxidizes long-chain alcohols and, in the presence of glutathione, is able to oxidize formaldehyde. Is responsible for yeast resistance to formaldehyde. Also acts as a S-nitroso-glutathione reductase by catalyzing the NADH-dependent reduction of S-nitrosoglutathione, thereby regulating protein S-nitrosylation. This chain is S-(hydroxymethyl)glutathione dehydrogenase (SFA1), found in Saccharomyces cerevisiae (strain ATCC 204508 / S288c) (Baker's yeast).